A 332-amino-acid polypeptide reads, in one-letter code: 3'(2'),5'-bisphosphate nucleotidase (332 aa).

The Proton acceptor role is filled by aspartate 49. Residues glutamate 73, aspartate 129, isoleucine 131, and aspartate 132 each coordinate Mg(2+). Residue threonine 134 is the Proton acceptor of the active site. Adenosine 3',5'-bisphosphate-binding residues include threonine 134, serine 245, lysine 248, arginine 262, and aspartate 274. Serine 245, lysine 248, arginine 262, and aspartate 274 together coordinate AMP. Mg(2+) is bound at residue aspartate 274.

This sequence belongs to the inositol monophosphatase superfamily. Requires Mg(2+) as cofactor.

It carries out the reaction 3'-phosphoadenylyl sulfate + H2O = adenosine 5'-phosphosulfate + phosphate. It catalyses the reaction adenosine 3',5'-bisphosphate + H2O = AMP + phosphate. The catalysed reaction is adenosine 2',5'-bisphosphate + H2O = AMP + phosphate. The enzyme catalyses 1D-myo-inositol 1,4-bisphosphate + H2O = 1D-myo-inositol 4-phosphate + phosphate. It carries out the reaction 1D-myo-inositol 1,3,4-trisphosphate + H2O = 1D-myo-inositol 3,4-bisphosphate + phosphate. In terms of biological role, phosphatase that converts adenosine 3'-phosphate 5'-phosphosulfate (PAPS) to adenosine 5'-phosphosulfate (APS) and 3'(2')-phosphoadenosine 5'-phosphate (PAP) to AMP. Is also able to hydrolyze inositol 1,4-bisphosphate and inositol 1,3,4-trisphosphate. The protein is 3'(2'),5'-bisphosphate nucleotidase of Dictyostelium discoideum (Social amoeba).